A 346-amino-acid chain; its full sequence is DNA primase small subunit PriS (346 aa).

Residues D95 and D97 contribute to the active site. Zn(2+) contacts are provided by C106, H108, C114, and C117. Positions 106-117 (CEHEPGTVCPIC) match the Zinc knuckle motif motif. Residue D280 is part of the active site.

Belongs to the eukaryotic-type primase small subunit family. In terms of assembly, heterodimer of a small subunit (PriS) and a large subunit (PriL). Mg(2+) is required as a cofactor. It depends on Mn(2+) as a cofactor.

Its function is as follows. Catalytic subunit of DNA primase, an RNA polymerase that catalyzes the synthesis of short RNA molecules used as primers for DNA polymerase during DNA replication. The small subunit contains the primase catalytic core and has DNA synthesis activity on its own. Binding to the large subunit stabilizes and modulates the activity, increasing the rate of DNA synthesis while decreasing the length of the DNA fragments, and conferring RNA synthesis capability. The DNA polymerase activity may enable DNA primase to also catalyze primer extension after primer synthesis. May also play a role in DNA repair. In Pyrococcus horikoshii (strain ATCC 700860 / DSM 12428 / JCM 9974 / NBRC 100139 / OT-3), this protein is DNA primase small subunit PriS.